Reading from the N-terminus, the 426-residue chain is Glutamate-1-semialdehyde 2,1-aminomutase (426 aa).

Lys264 is subject to N6-(pyridoxal phosphate)lysine.

It belongs to the class-III pyridoxal-phosphate-dependent aminotransferase family. HemL subfamily. The cofactor is pyridoxal 5'-phosphate.

The protein localises to the cytoplasm. The catalysed reaction is (S)-4-amino-5-oxopentanoate = 5-aminolevulinate. The protein operates within porphyrin-containing compound metabolism; protoporphyrin-IX biosynthesis; 5-aminolevulinate from L-glutamyl-tRNA(Glu): step 2/2. This Methanocella arvoryzae (strain DSM 22066 / NBRC 105507 / MRE50) protein is Glutamate-1-semialdehyde 2,1-aminomutase.